The following is a 776-amino-acid chain: MATLGVPRIGRRRELKFALESYWSGKSPAADLLATAKALRAASWREQHDRGVSKIPSNDFSLYDHVLDTVAMVGAVPARYTWTDGEVPLDTYFAMARGNQDQAADCGHAGDEHAANGHGLAAMEMTKWFDTNYHYIVPELTDDQSFALSSAKPVDHFLEAKALGIHTRPVLLGPVTFLKLAKSPEEGFNPIALLPRLLPVYEELLRRLKLAGADWVQIDEPALVVDLVPNERDALQFAYCRLSKAAPELKIMVAIYFGSLGDNLETAISLPVAGLHVDLVRAPEQLETVGRLAQKDLVLSLGLIDGRNVWRANLPAILDRIKPIVAGWPLDRVEIAPSCSMLHVPIDLDMETALDADVKSWLAFAAQKTDELVVLARALAEGRDAVAAELEASAEAAAARATSAKVHDPLVEGRVASIKVAMTRRKSAFDVRSKLQGDTFGLPSFPTTTIGSFPQTAEVRKARAAHAKGELSYVDYEAFLKKEIEAAVRWQEEIGLDVLVHGEFERNDMVQYFAEQLRGFAFTQHGWVQSYGSRFVRPPIIIGDVSRQNPMTLHWWRYAQSLTPKPVKGMLTGPVTILNWSFVRDDLPRSAVCRQVALAIRDEVSDLEKAGAKMIQIDEAALREGLPLREADWQAYLDWAVECFRLASTAVGDATQIHTHMCYSEFGDIVDAIAAMDADVISIETSRSQLELLDTLRTFKYPNEIGPGVYDIHSPRVPEVGEISNLIMLARKRLSDGQLWVNPDCGLKTRRWEEVRPALVNMVAAARAIRQKAQTA.

5-methyltetrahydropteroyltri-L-glutamate-binding positions include 13–16 and Lys127; that span reads RELK. L-homocysteine contacts are provided by residues 450–452 and Glu503; that span reads IGS. Residues 450-452 and Glu503 contribute to the L-methionine site; that span reads IGS. Trp580 provides a ligand contact to 5-methyltetrahydropteroyltri-L-glutamate. Asp618 is a binding site for L-homocysteine. L-methionine is bound at residue Asp618. Glu624 lines the 5-methyltetrahydropteroyltri-L-glutamate pocket. His660, Cys662, and Glu684 together coordinate Zn(2+). His713 serves as the catalytic Proton donor. Cys745 is a binding site for Zn(2+).

This sequence belongs to the vitamin-B12 independent methionine synthase family. Requires Zn(2+) as cofactor.

The enzyme catalyses 5-methyltetrahydropteroyltri-L-glutamate + L-homocysteine = tetrahydropteroyltri-L-glutamate + L-methionine. Its pathway is amino-acid biosynthesis; L-methionine biosynthesis via de novo pathway; L-methionine from L-homocysteine (MetE route): step 1/1. In terms of biological role, catalyzes the transfer of a methyl group from 5-methyltetrahydrofolate to homocysteine resulting in methionine formation. The polypeptide is 5-methyltetrahydropteroyltriglutamate--homocysteine methyltransferase (Mesorhizobium japonicum (strain LMG 29417 / CECT 9101 / MAFF 303099) (Mesorhizobium loti (strain MAFF 303099))).